A 181-amino-acid chain; its full sequence is Protein Syd (181 aa).

This sequence belongs to the Syd family.

It is found in the cell inner membrane. Functionally, interacts with the SecY protein in vivo. May bind preferentially to an uncomplexed state of SecY, thus functioning either as a chelating agent for excess SecY in the cell or as a regulatory factor that negatively controls the translocase function. The protein is Protein Syd of Klebsiella pneumoniae subsp. pneumoniae (strain ATCC 700721 / MGH 78578).